Consider the following 166-residue polypeptide: Signal peptidase complex catalytic subunit SEC11 (166 aa).

Residues 1 to 9 (MNIRQQLTQ) lie on the Cytoplasmic side of the membrane. The helical; Signal-anchor for type II membrane protein transmembrane segment at 10–30 (LLTLGYVFASAFMLWKTLSVV) threads the bilayer. Topologically, residues 31–166 (ANLHSPIVVV…LGLSSLFSNE (136 aa)) are lumenal. Active-site charge relay system residues include Ser44, His83, and Asp108. The C-terminal short (CTS) helix stretch occupies residues 152 to 163 (GLLGLLGLSSLF).

Belongs to the peptidase S26B family. As to quaternary structure, component of the signal peptidase complex (SPC) composed of a catalytic subunit SEC11 and three accessory subunits SPC1, SPC2 and SPC3. The complex induces a local thinning of the ER membrane which is used to measure the length of the signal peptide (SP) h-region of protein substrates. This ensures the selectivity of the complex towards h-regions shorter than 18-20 amino acids. SPC associates with the translocon complex.

Its subcellular location is the endoplasmic reticulum membrane. It catalyses the reaction Cleavage of hydrophobic, N-terminal signal or leader sequences from secreted and periplasmic proteins.. Functionally, catalytic component of the signal peptidase complex (SPC) which catalyzes the cleavage of N-terminal signal sequences from nascent proteins as they are translocated into the lumen of the endoplasmic reticulum. Specifically cleaves N-terminal signal peptides that contain a hydrophobic alpha-helix (h-region) shorter than 18-20 amino acids. The chain is Signal peptidase complex catalytic subunit SEC11 (SEC11) from Lodderomyces elongisporus (strain ATCC 11503 / CBS 2605 / JCM 1781 / NBRC 1676 / NRRL YB-4239) (Yeast).